A 218-amino-acid polypeptide reads, in one-letter code: Glutathione S-transferase Mu 2 (218 aa).

A GST N-terminal domain is found at Pro-2–Gly-88. Residue Tyr-7–Trp-8 coordinates glutathione. 2 positions are modified to phosphoserine: Ser-27 and Ser-44. Glutathione-binding positions include Arg-43–Trp-46, Lys-50, Asn-59–Leu-60, and Gln-72–Ser-73. The GST C-terminal domain occupies Thr-90–Ile-208. Tyr-116 serves as a coordination point for substrate. A Phosphoserine modification is found at Ser-117.

It belongs to the GST superfamily. Mu family. Homodimer.

It is found in the cytoplasm. It catalyses the reaction RX + glutathione = an S-substituted glutathione + a halide anion + H(+). The catalysed reaction is 11(S)-hydroxy-14(S),15(S)-epoxy-(5Z,8Z,12E)-eicosatrienoate + glutathione = (11S,15S)-dihydroxy-14(R)-S-glutathionyl-(5Z,8Z,12E)-eicosatrienoate. In terms of biological role, conjugation of reduced glutathione to a wide number of exogenous and endogenous hydrophobic electrophiles. Participates in the formation of novel hepoxilin regioisomers. The protein is Glutathione S-transferase Mu 2 of Mus musculus (Mouse).